The chain runs to 369 residues: Glutamate 5-kinase (369 aa).

Lys-9 lines the ATP pocket. Substrate-binding residues include Ser-49, Asp-136, and Asn-148. Residues 168-169 and 210-216 each bind ATP; these read TD and TGGMLTK. The PUA domain occupies 275-355; sequence QGEIYVDQGA…KGVVIHRDDW (81 aa).

Belongs to the glutamate 5-kinase family.

It localises to the cytoplasm. It catalyses the reaction L-glutamate + ATP = L-glutamyl 5-phosphate + ADP. The protein operates within amino-acid biosynthesis; L-proline biosynthesis; L-glutamate 5-semialdehyde from L-glutamate: step 1/2. Catalyzes the transfer of a phosphate group to glutamate to form L-glutamate 5-phosphate. This Streptococcus gordonii (strain Challis / ATCC 35105 / BCRC 15272 / CH1 / DL1 / V288) protein is Glutamate 5-kinase.